The primary structure comprises 214 residues: Osteoclast-stimulating factor 1 (214 aa).

An N-acetylserine modification is found at Ser-2. Residues 12-71 enclose the SH3 domain; it reads GQVKVFRALYTFEPRTPDELYFEEGDIIYITDMSDTNWWKGTCKGRTGLIPSNYVAEQAE. 3 ANK repeats span residues 72–101, 105–135, and 139–168; these read SIDNPLHEAAKRGNLSWLRECLDNRVGVNG, AGSTALYWACHGGHRDIVEMLFTQPNIELNQ, and LGDTALHAAAWKGYADIVQLLLEKGARTDL. Residues Ser-202 and Ser-213 each carry the phosphoserine modification.

As to quaternary structure, interacts with SRC and SMN1. Interacts with FASLG.

Its subcellular location is the cytoplasm. Functionally, induces bone resorption, acting probably through a signaling cascade which results in the secretion of factor(s) enhancing osteoclast formation and activity. In Bos taurus (Bovine), this protein is Osteoclast-stimulating factor 1 (OSTF1).